We begin with the raw amino-acid sequence, 681 residues long: DNA ligase (681 aa).

NAD(+) is bound by residues 34–38 (DEEYD), 83–84 (SL), and Glu112. Lys114 functions as the N6-AMP-lysine intermediate in the catalytic mechanism. Residues Arg135, Glu169, Lys285, and Lys309 each contribute to the NAD(+) site. Zn(2+) contacts are provided by Cys403, Cys406, Cys422, and Cys427. Residues 584–673 (TTSNILDGLT…GVELKESWKK (90 aa)) enclose the BRCT domain.

It belongs to the NAD-dependent DNA ligase family. LigA subfamily. The cofactor is Mg(2+). Requires Mn(2+) as cofactor.

The catalysed reaction is NAD(+) + (deoxyribonucleotide)n-3'-hydroxyl + 5'-phospho-(deoxyribonucleotide)m = (deoxyribonucleotide)n+m + AMP + beta-nicotinamide D-nucleotide.. DNA ligase that catalyzes the formation of phosphodiester linkages between 5'-phosphoryl and 3'-hydroxyl groups in double-stranded DNA using NAD as a coenzyme and as the energy source for the reaction. It is essential for DNA replication and repair of damaged DNA. In Fervidobacterium nodosum (strain ATCC 35602 / DSM 5306 / Rt17-B1), this protein is DNA ligase.